The following is a 509-amino-acid chain: Maturase K (509 aa).

This sequence belongs to the intron maturase 2 family. MatK subfamily.

The protein resides in the plastid. The protein localises to the chloroplast. In terms of biological role, usually encoded in the trnK tRNA gene intron. Probably assists in splicing its own and other chloroplast group II introns. The polypeptide is Maturase K (Metasequoia glyptostroboides (Dawn redwood)).